The chain runs to 261 residues: HLA class II histocompatibility antigen, DQ beta 1 chain (261 aa).

Residues 1 to 32 (MSWKKALRIPGGLRAATVTLMLAMLSTPVAEG) form the signal peptide. The tract at residues 33–126 (RDSPEDFVYQ…LELRTTLQRR (94 aa)) is beta-1. The Extracellular portion of the chain corresponds to 33–230 (RDSPEDFVYQ…RAQSESAQSK (198 aa)). 2 disulfide bridges follow: C47–C111 and C149–C205. The N-linked (GlcNAc...) asparagine glycan is linked to N51. The interval 127–220 (VEPTVTISPS…SLQNPITVEW (94 aa)) is beta-2. In terms of domain architecture, Ig-like C1-type spans 129 to 217 (PTVTISPSRT…EHPSLQNPIT (89 aa)). Positions 221–230 (RAQSESAQSK) are connecting peptide. The chain crosses the membrane as a helical span at residues 231 to 251 (MLSGIGGFVLGLIFLGLGLII). Over 252–261 (HHRSQKGLLH) the chain is Cytoplasmic.

Belongs to the MHC class II family. As to quaternary structure, heterodimer of an alpha and a beta subunit; also referred as MHC class II molecule. In the endoplasmic reticulum (ER) it forms a heterononamer; 3 MHC class II molecules bind to a CD74 homotrimer (also known as invariant chain or HLA class II histocompatibility antigen gamma chain). In the endosomal/lysosomal system; CD74 undergoes sequential degradation by various proteases; leaving a small fragment termed CLIP on each MHC class II molecule. MHC class II molecule interacts with HLA_DM, and HLA_DO in B-cells, in order to release CLIP and facilitate the binding of antigenic peptides.

It is found in the cell membrane. It localises to the endoplasmic reticulum membrane. The protein localises to the golgi apparatus. The protein resides in the trans-Golgi network membrane. Its subcellular location is the endosome membrane. It is found in the lysosome membrane. Its function is as follows. Binds peptides derived from antigens that access the endocytic route of antigen presenting cells (APC) and presents them on the cell surface for recognition by the CD4 T-cells. The peptide binding cleft accommodates peptides of 10-30 residues. The peptides presented by MHC class II molecules are generated mostly by degradation of proteins that access the endocytic route, where they are processed by lysosomal proteases and other hydrolases. Exogenous antigens that have been endocytosed by the APC are thus readily available for presentation via MHC II molecules, and for this reason this antigen presentation pathway is usually referred to as exogenous. As membrane proteins on their way to degradation in lysosomes as part of their normal turn-over are also contained in the endosomal/lysosomal compartments, exogenous antigens must compete with those derived from endogenous components. Autophagy is also a source of endogenous peptides, autophagosomes constitutively fuse with MHC class II loading compartments. In addition to APCs, other cells of the gastrointestinal tract, such as epithelial cells, express MHC class II molecules and CD74 and act as APCs, which is an unusual trait of the GI tract. To produce a MHC class II molecule that presents an antigen, three MHC class II molecules (heterodimers of an alpha and a beta chain) associate with a CD74 trimer in the ER to form a heterononamer. Soon after the entry of this complex into the endosomal/lysosomal system where antigen processing occurs, CD74 undergoes a sequential degradation by various proteases, including CTSS and CTSL, leaving a small fragment termed CLIP (class-II-associated invariant chain peptide). The removal of CLIP is facilitated by HLA-DM via direct binding to the alpha-beta-CLIP complex so that CLIP is released. HLA-DM stabilizes MHC class II molecules until primary high affinity antigenic peptides are bound. The MHC II molecule bound to a peptide is then transported to the cell membrane surface. In B-cells, the interaction between HLA-DM and MHC class II molecules is regulated by HLA-DO. Primary dendritic cells (DCs) also to express HLA-DO. Lysosomal microenvironment has been implicated in the regulation of antigen loading into MHC II molecules, increased acidification produces increased proteolysis and efficient peptide loading. This is HLA class II histocompatibility antigen, DQ beta 1 chain (HLA-DQB1) from Homo sapiens (Human).